The sequence spans 469 residues: 3-isopropylmalate dehydratase large subunit (469 aa).

Residues C350, C410, and C413 each coordinate [4Fe-4S] cluster.

It belongs to the aconitase/IPM isomerase family. LeuC type 1 subfamily. As to quaternary structure, heterodimer of LeuC and LeuD. The cofactor is [4Fe-4S] cluster.

It catalyses the reaction (2R,3S)-3-isopropylmalate = (2S)-2-isopropylmalate. The protein operates within amino-acid biosynthesis; L-leucine biosynthesis; L-leucine from 3-methyl-2-oxobutanoate: step 2/4. Its function is as follows. Catalyzes the isomerization between 2-isopropylmalate and 3-isopropylmalate, via the formation of 2-isopropylmaleate. This chain is 3-isopropylmalate dehydratase large subunit, found in Agrobacterium fabrum (strain C58 / ATCC 33970) (Agrobacterium tumefaciens (strain C58)).